Reading from the N-terminus, the 639-residue chain is Phosphomethylpyrimidine synthase (639 aa).

The tract at residues 49 to 71 is disordered; that stretch reads DTPTDFGGEQNRPVRVYDTSGPY. Substrate is bound by residues Asn231, Met260, Tyr289, His325, 345 to 347, 386 to 389, and Glu425; these read SRG and DGLR. His429 contacts Zn(2+). Tyr452 is a binding site for substrate. Residue His493 participates in Zn(2+) binding. [4Fe-4S] cluster contacts are provided by Cys573, Cys576, and Cys581.

It belongs to the ThiC family. As to quaternary structure, homodimer. [4Fe-4S] cluster serves as cofactor.

The catalysed reaction is 5-amino-1-(5-phospho-beta-D-ribosyl)imidazole + S-adenosyl-L-methionine = 4-amino-2-methyl-5-(phosphooxymethyl)pyrimidine + CO + 5'-deoxyadenosine + formate + L-methionine + 3 H(+). It participates in cofactor biosynthesis; thiamine diphosphate biosynthesis. Functionally, catalyzes the synthesis of the hydroxymethylpyrimidine phosphate (HMP-P) moiety of thiamine from aminoimidazole ribotide (AIR) in a radical S-adenosyl-L-methionine (SAM)-dependent reaction. The chain is Phosphomethylpyrimidine synthase from Teredinibacter turnerae (strain ATCC 39867 / T7901).